The sequence spans 249 residues: Uridylate kinase (249 aa).

23 to 26 (KISG) contacts ATP. The interval 31–36 (GDQGFG) is involved in allosteric activation by GTP. Residue Gly65 coordinates UMP. Gly66 and Arg70 together coordinate ATP. UMP is bound by residues Asp85 and 146 to 153 (TGNPYFTT). The ATP site is built by Thr173, Tyr179, and Asp182.

Belongs to the UMP kinase family. In terms of assembly, homohexamer.

It localises to the cytoplasm. The catalysed reaction is UMP + ATP = UDP + ADP. It functions in the pathway pyrimidine metabolism; CTP biosynthesis via de novo pathway; UDP from UMP (UMPK route): step 1/1. With respect to regulation, allosterically activated by GTP. Inhibited by UTP. Functionally, catalyzes the reversible phosphorylation of UMP to UDP. The sequence is that of Uridylate kinase from Jannaschia sp. (strain CCS1).